The primary structure comprises 139 residues: FAD synthase (139 aa).

ATP-binding positions include 9–10, 14–17, and Asp92; these read TF and HPGH.

The protein belongs to the archaeal FAD synthase family. As to quaternary structure, homodimer. Requires a divalent metal cation as cofactor.

The catalysed reaction is FMN + ATP + H(+) = FAD + diphosphate. It participates in cofactor biosynthesis; FAD biosynthesis; FAD from FMN: step 1/1. Its function is as follows. Catalyzes the transfer of the AMP portion of ATP to flavin mononucleotide (FMN) to produce flavin adenine dinucleotide (FAD) coenzyme. The chain is FAD synthase from Methanosarcina barkeri (strain Fusaro / DSM 804).